The sequence spans 72 residues: Translation initiation factor IF-1 (72 aa).

The S1-like domain maps to M1–R72.

Belongs to the IF-1 family. Component of the 30S ribosomal translation pre-initiation complex which assembles on the 30S ribosome in the order IF-2 and IF-3, IF-1 and N-formylmethionyl-tRNA(fMet); mRNA recruitment can occur at any time during PIC assembly.

It is found in the cytoplasm. Its function is as follows. One of the essential components for the initiation of protein synthesis. Stabilizes the binding of IF-2 and IF-3 on the 30S subunit to which N-formylmethionyl-tRNA(fMet) subsequently binds. Helps modulate mRNA selection, yielding the 30S pre-initiation complex (PIC). Upon addition of the 50S ribosomal subunit IF-1, IF-2 and IF-3 are released leaving the mature 70S translation initiation complex. The chain is Translation initiation factor IF-1 from Buchnera aphidicola subsp. Schizaphis graminum (strain Sg).